The following is a 166-amino-acid chain: Urease accessory protein UreE 2 (166 aa).

The tract at residues 133–156 (QPEHGAYGGGHHHSRAGEEDFNYP) is disordered.

Belongs to the UreE family.

The protein localises to the cytoplasm. Its function is as follows. Involved in urease metallocenter assembly. Binds nickel. Probably functions as a nickel donor during metallocenter assembly. This Pseudomonas syringae pv. tomato (strain ATCC BAA-871 / DC3000) protein is Urease accessory protein UreE 2.